The primary structure comprises 204 residues: Imidazoleglycerol-phosphate dehydratase (204 aa).

The protein belongs to the imidazoleglycerol-phosphate dehydratase family.

It localises to the cytoplasm. The catalysed reaction is D-erythro-1-(imidazol-4-yl)glycerol 3-phosphate = 3-(imidazol-4-yl)-2-oxopropyl phosphate + H2O. It participates in amino-acid biosynthesis; L-histidine biosynthesis; L-histidine from 5-phospho-alpha-D-ribose 1-diphosphate: step 6/9. The chain is Imidazoleglycerol-phosphate dehydratase from Rhodococcus jostii (strain RHA1).